The primary structure comprises 180 residues: NADH-quinone oxidoreductase subunit I (180 aa).

4Fe-4S ferredoxin-type domains are found at residues 50 to 80 (LTRN…LQKS) and 90 to 119 (KFFR…LMPD). The [4Fe-4S] cluster site is built by Cys60, Cys63, Cys66, Cys70, Cys99, Cys102, Cys105, and Cys109.

It belongs to the complex I 23 kDa subunit family. As to quaternary structure, NDH-1 is composed of 13 different subunits. Subunits NuoA, H, J, K, L, M, N constitute the membrane sector of the complex. It depends on [4Fe-4S] cluster as a cofactor.

The protein localises to the cell membrane. The catalysed reaction is a quinone + NADH + 5 H(+)(in) = a quinol + NAD(+) + 4 H(+)(out). Functionally, NDH-1 shuttles electrons from NADH, via FMN and iron-sulfur (Fe-S) centers, to quinones in the respiratory chain. The immediate electron acceptor for the enzyme in this species is believed to be ubiquinone. Couples the redox reaction to proton translocation (for every two electrons transferred, four hydrogen ions are translocated across the cytoplasmic membrane), and thus conserves the redox energy in a proton gradient. The chain is NADH-quinone oxidoreductase subunit I from Buchnera aphidicola subsp. Schizaphis graminum (strain Sg).